We begin with the raw amino-acid sequence, 147 residues long: Large ribosomal subunit protein uL13 (147 aa).

This sequence belongs to the universal ribosomal protein uL13 family. As to quaternary structure, part of the 50S ribosomal subunit.

Functionally, this protein is one of the early assembly proteins of the 50S ribosomal subunit, although it is not seen to bind rRNA by itself. It is important during the early stages of 50S assembly. The protein is Large ribosomal subunit protein uL13 of Salinispora arenicola (strain CNS-205).